Reading from the N-terminus, the 287-residue chain is Acetylglutamate kinase (287 aa).

Substrate-binding positions include 70 to 71, Arg-92, and Asn-184; that span reads GG.

Belongs to the acetylglutamate kinase family. ArgB subfamily.

The protein resides in the cytoplasm. It carries out the reaction N-acetyl-L-glutamate + ATP = N-acetyl-L-glutamyl 5-phosphate + ADP. The protein operates within amino-acid biosynthesis; L-arginine biosynthesis; N(2)-acetyl-L-ornithine from L-glutamate: step 2/4. Functionally, catalyzes the ATP-dependent phosphorylation of N-acetyl-L-glutamate. The chain is Acetylglutamate kinase from Dinoroseobacter shibae (strain DSM 16493 / NCIMB 14021 / DFL 12).